The sequence spans 464 residues: tRNA-2-methylthio-N(6)-dimethylallyladenosine synthase (464 aa).

Residues Gly-19–Leu-135 form the MTTase N-terminal domain. [4Fe-4S] cluster contacts are provided by Cys-28, Cys-64, Cys-98, Cys-170, Cys-174, and Cys-177. In terms of domain architecture, Radical SAM core spans Arg-156 to Gln-393. A TRAM domain is found at Glu-396 to Leu-464.

This sequence belongs to the methylthiotransferase family. MiaB subfamily. In terms of assembly, monomer. [4Fe-4S] cluster serves as cofactor.

It is found in the cytoplasm. The catalysed reaction is N(6)-dimethylallyladenosine(37) in tRNA + (sulfur carrier)-SH + AH2 + 2 S-adenosyl-L-methionine = 2-methylsulfanyl-N(6)-dimethylallyladenosine(37) in tRNA + (sulfur carrier)-H + 5'-deoxyadenosine + L-methionine + A + S-adenosyl-L-homocysteine + 2 H(+). Its function is as follows. Catalyzes the methylthiolation of N6-(dimethylallyl)adenosine (i(6)A), leading to the formation of 2-methylthio-N6-(dimethylallyl)adenosine (ms(2)i(6)A) at position 37 in tRNAs that read codons beginning with uridine. This Prochlorococcus marinus (strain MIT 9215) protein is tRNA-2-methylthio-N(6)-dimethylallyladenosine synthase.